The primary structure comprises 484 residues: Probable cytochrome P450 555A1 (484 aa).

The chain crosses the membrane as a helical span at residues 1–21; the sequence is MIIIVIVVFLFYFSFLNLNLN. C432 contributes to the heme binding site.

It belongs to the cytochrome P450 family. Heme is required as a cofactor.

It localises to the membrane. This is Probable cytochrome P450 555A1 (cyp555A1) from Dictyostelium discoideum (Social amoeba).